A 289-amino-acid chain; its full sequence is Xyloglucan endotransglucosylase/hydrolase protein 15 (289 aa).

The N-terminal stretch at M1–A25 is a signal peptide. Residues S26–Y216 enclose the GH16 domain. The active-site Nucleophile is the E102. E106 functions as the Proton donor in the catalytic mechanism. E106 serves as a coordination point for xyloglucan. N110 carries N-linked (GlcNAc...) asparagine glycosylation. Xyloglucan-binding positions include H119–N121, D129–E131, D195–W196, and G200. 2 cysteine pairs are disulfide-bonded: C224–C230 and C270–C284. R275 contacts xyloglucan.

Belongs to the glycosyl hydrolase 16 family. XTH group 2 subfamily. In terms of processing, contains at least one intrachain disulfide bond essential for its enzymatic activity. As to expression, strongly expressed in roots, hypocotyls and cotyledons. Aslo detected in inflorescence stems and in the carpels and styles in flowers.

The protein localises to the secreted. It is found in the cell wall. It localises to the extracellular space. The protein resides in the apoplast. It catalyses the reaction breaks a beta-(1-&gt;4) bond in the backbone of a xyloglucan and transfers the xyloglucanyl segment on to O-4 of the non-reducing terminal glucose residue of an acceptor, which can be a xyloglucan or an oligosaccharide of xyloglucan.. The enzyme catalyses xyloglucan + H2O = xyloglucan oligosaccharides.. Functionally, catalyzes xyloglucan endohydrolysis (XEH) and/or endotransglycosylation (XET). Cleaves and religates xyloglucan polymers, an essential constituent of the primary cell wall, and thereby participates in cell wall construction of growing tissues. Has a high XET activity, but little or no XEH activity in vitro. Acceptor preferences are XXXGol &gt; XLLGol = XLFGol &gt; XXLGol &gt; XXFGol. In Arabidopsis thaliana (Mouse-ear cress), this protein is Xyloglucan endotransglucosylase/hydrolase protein 15.